Here is a 47-residue protein sequence, read N- to C-terminus: Delta-stichotoxin-Hcr3a (47 aa).

Position 3 is a hydroxyproline (Pro3). Cystine bridges form between Cys4/Cys44, Cys6/Cys34, and Cys27/Cys45.

Belongs to the sea anemone sodium channel inhibitory toxin family. Type I subfamily.

It is found in the secreted. The protein localises to the nematocyst. Inhibits voltage-gated sodium channels (Nav). The protein is Delta-stichotoxin-Hcr3a of Radianthus crispa (Leathery sea anemone).